The chain runs to 84 residues: Exodeoxyribonuclease 7 small subunit (84 aa).

This sequence belongs to the XseB family. As to quaternary structure, heterooligomer composed of large and small subunits.

It is found in the cytoplasm. It catalyses the reaction Exonucleolytic cleavage in either 5'- to 3'- or 3'- to 5'-direction to yield nucleoside 5'-phosphates.. Its function is as follows. Bidirectionally degrades single-stranded DNA into large acid-insoluble oligonucleotides, which are then degraded further into small acid-soluble oligonucleotides. The chain is Exodeoxyribonuclease 7 small subunit from Bartonella henselae (strain ATCC 49882 / DSM 28221 / CCUG 30454 / Houston 1) (Rochalimaea henselae).